The sequence spans 136 residues: Gonadotropin subunit beta-2 (136 aa).

A signal peptide spans 1-21; sequence MVCLFLGASSFIWSLAPAAAA. Cystine bridges form between Cys-27/Cys-75, Cys-41/Cys-90, Cys-44/Cys-128, Cys-52/Cys-106, Cys-56/Cys-108, and Cys-111/Cys-118. The N-linked (GlcNAc...) asparagine glycan is linked to Asn-31.

It belongs to the glycoprotein hormones subunit beta family. In terms of assembly, heterodimer of an alpha and a beta chain.

Its subcellular location is the secreted. Functionally, involved in gametogenesis and steroidogenesis. The sequence is that of Gonadotropin subunit beta-2 (cgbb) from Fundulus heteroclitus (Killifish).